Reading from the N-terminus, the 447-residue chain is UPF0210 protein Lreu_0940 (447 aa).

The protein belongs to the UPF0210 family. Homodimer.

This chain is UPF0210 protein Lreu_0940, found in Limosilactobacillus reuteri (strain DSM 20016) (Lactobacillus reuteri).